Consider the following 147-residue polypeptide: MADFDMVLKCWGPVEADYTTHGSLVLTRLFTEHPETLKLFPKFAGIAHGDLAGDAGVSAHGATVLNKLGDLLKARGAHAALLKPLSSSHATKHKIPIINFKLIAEVIGKVMEEKAGLDAAGQTALRNVMAVIIADMEADYKELGFTE.

The Globin domain occupies A2–K141. Residue H60 coordinates nitrite. H60 serves as a coordination point for O2. H89 is a binding site for heme b.

Belongs to the globin family. Monomeric.

The protein localises to the cytoplasm. It is found in the sarcoplasm. The enzyme catalyses Fe(III)-heme b-[protein] + nitric oxide + H2O = Fe(II)-heme b-[protein] + nitrite + 2 H(+). The catalysed reaction is H2O2 + AH2 = A + 2 H2O. Functionally, monomeric heme protein which primary function is to store oxygen and facilitate its diffusion within muscle tissues. Reversibly binds oxygen through a pentacoordinated heme iron and enables its timely and efficient release as needed during periods of heightened demand. Depending on the oxidative conditions of tissues and cells, and in addition to its ability to bind oxygen, it also has a nitrite reductase activity whereby it regulates the production of bioactive nitric oxide. Under stress conditions, like hypoxia and anoxia, it also protects cells against reactive oxygen species thanks to its pseudoperoxidase activity. The sequence is that of Myoglobin (mb) from Gobionotothen gibberifrons (Humped rockcod).